We begin with the raw amino-acid sequence, 65 residues long: Disintegrin CC8B (65 aa).

Positions 1–65 (NSAHPCCDPV…DCPRNPWHKS (65 aa)) constitute a Disintegrin domain. Cystine bridges form between Cys-6–Cys-29, Cys-20–Cys-26, Cys-25–Cys-50, and Cys-38–Cys-57. Positions 42–44 (WGD) match the Cell attachment site; atypical (WGD) motif.

This sequence belongs to the disintegrin family. Dimeric disintegrin subfamily. Heterodimer with CC8A; disulfide-linked. In terms of tissue distribution, expressed by the venom gland.

The protein localises to the secreted. In terms of biological role, inhibits integrins alpha-IIb/beta-3 (ITGA2B/ITGB3), alpha-V/beta-3 (ITGAV/ITGB3), and alpha-5/beta-1 (ITGA5/ITGB1). The sequence is that of Disintegrin CC8B from Cerastes cerastes (Horned desert viper).